The sequence spans 694 residues: Beta-galactosidase (694 aa).

The interval 1 to 31 (MGKRFPSGWFSPRVHPPRRQRSPMTNQATPG) is disordered. Positions 22 to 31 (SPMTNQATPG) are enriched in polar residues. 2 residues coordinate substrate: R144 and N182. E183 acts as the Proton donor in catalysis. Residue E341 is the Nucleophile of the active site. Residues W349 and 389–392 (EKFH) each bind substrate.

This sequence belongs to the glycosyl hydrolase 42 family. In terms of assembly, homotrimer.

The catalysed reaction is Hydrolysis of terminal non-reducing beta-D-galactose residues in beta-D-galactosides.. With respect to regulation, strongly inhibited by glucose. No activity is lost during treatment with 100 mM EDTA after 2 hours. Activity not considerably affected by metal ions (5 mM), including Na(+), K(+), Mg(2+), Co(2+) and Ca(2+). Completely inhibited by Cu(2+) and Zn(2+) (5 mM) and is strongly inhibited by Mn(2+) (11%), Fe(2+) (25%) and Ni(2+) (38%) in comparison with the activity in the absence of cations (100%). Activity not affected by dithiothreitol, beta-mercaptoethanol and L-cysteine whereas reduced glutathione almost completely inactivates it. With ONPG as substrate, the addition of ethanol up to 20% still slightly stimulates activity. The activity increases up to 120% in the presence of 8% v/v ethanol at pH 5.5. Functionally, hydrolyzes p-nitrophenyl-beta-D-galactopyranoside (PNPG), o-nitrophenyl-beta-D-galactopyranoside (ONPG) and chromogen 5-bromo-4-chloro-3-indolyl-beta-D-galactopyranoside (X-gal), with highest activity against PNPG. Also acts on p-nitrophenyl-beta-D-glucopyranoside (PNPGlu) and o-nitrophenyl-beta-D-glucopyranoside (ONPGlu), but with significantly lower activity. The chain is Beta-galactosidase from Arthrobacter sp.